The primary structure comprises 335 residues: tRNA N6-adenosine threonylcarbamoyltransferase (335 aa).

Fe cation-binding residues include H111 and H115. Substrate is bound by residues 133 to 137, D166, G179, and N276; that span reads LISGG. D301 is a binding site for Fe cation.

It belongs to the KAE1 / TsaD family. The cofactor is Fe(2+).

It localises to the cytoplasm. The catalysed reaction is L-threonylcarbamoyladenylate + adenosine(37) in tRNA = N(6)-L-threonylcarbamoyladenosine(37) in tRNA + AMP + H(+). In terms of biological role, required for the formation of a threonylcarbamoyl group on adenosine at position 37 (t(6)A37) in tRNAs that read codons beginning with adenine. Is involved in the transfer of the threonylcarbamoyl moiety of threonylcarbamoyl-AMP (TC-AMP) to the N6 group of A37, together with TsaE and TsaB. TsaD likely plays a direct catalytic role in this reaction. The chain is tRNA N6-adenosine threonylcarbamoyltransferase from Wolbachia sp. subsp. Brugia malayi (strain TRS).